Consider the following 88-residue polypeptide: UPF0297 protein BT9727_4120 (88 aa).

Belongs to the UPF0297 family.

This Bacillus thuringiensis subsp. konkukian (strain 97-27) protein is UPF0297 protein BT9727_4120.